A 206-amino-acid polypeptide reads, in one-letter code: Ribosomal RNA large subunit methyltransferase E (206 aa).

Residues Gly-60, Trp-62, Asp-80, Asp-96, and Asp-121 each coordinate S-adenosyl-L-methionine. Lys-161 serves as the catalytic Proton acceptor.

This sequence belongs to the class I-like SAM-binding methyltransferase superfamily. RNA methyltransferase RlmE family.

It localises to the cytoplasm. The enzyme catalyses uridine(2552) in 23S rRNA + S-adenosyl-L-methionine = 2'-O-methyluridine(2552) in 23S rRNA + S-adenosyl-L-homocysteine + H(+). Specifically methylates the uridine in position 2552 of 23S rRNA at the 2'-O position of the ribose in the fully assembled 50S ribosomal subunit. The sequence is that of Ribosomal RNA large subunit methyltransferase E from Legionella pneumophila (strain Lens).